The primary structure comprises 188 residues: Elongation factor P (188 aa).

Belongs to the elongation factor P family.

It localises to the cytoplasm. It functions in the pathway protein biosynthesis; polypeptide chain elongation. In terms of biological role, involved in peptide bond synthesis. Stimulates efficient translation and peptide-bond synthesis on native or reconstituted 70S ribosomes in vitro. Probably functions indirectly by altering the affinity of the ribosome for aminoacyl-tRNA, thus increasing their reactivity as acceptors for peptidyl transferase. The protein is Elongation factor P of Chlorobaculum parvum (strain DSM 263 / NCIMB 8327) (Chlorobium vibrioforme subsp. thiosulfatophilum).